The primary structure comprises 205 residues: High frequency lysogenization protein HflD homolog (205 aa).

The protein belongs to the HflD family.

It is found in the cytoplasm. Its subcellular location is the cell inner membrane. This chain is High frequency lysogenization protein HflD homolog, found in Shewanella oneidensis (strain ATCC 700550 / JCM 31522 / CIP 106686 / LMG 19005 / NCIMB 14063 / MR-1).